The primary structure comprises 126 residues: Autophagy-related protein 8-like protein DDB_G0290491 (126 aa).

A lipid anchor (Phosphatidylethanolamine amidated glycine) is attached at G123. A propeptide spans 124–126 (SDI) (removed in mature form).

This sequence belongs to the ATG8 family.

It is found in the membrane. The polypeptide is Autophagy-related protein 8-like protein DDB_G0290491 (Dictyostelium discoideum (Social amoeba)).